The sequence spans 290 residues: MSKKHPIISVTGSSGAGTSTVKHTFDQIFRREGVKAVSIEGDAFHRFNRADMKAELDRRYAAGDATFSHFSYEANELKELERVFREYGETGQGRTRTYVHDDAEAARTGVAPGNFTDWRDFDSDSHLLFYEGLHGAVVNSEVNIAGLADLKIGVVPVINLEWIQKIHRDRATRGYTTEAVTDVILRRMHAYVHCIVPQFSQTDINFQRVPVVDTSNPFIARWIPTADESVVVIRFRNPRGIDFPYLTSMIHGSWMSRANSIVVPGNKLDLAMQLILTPLIDRVVRESKVA.

12–20 (GSSGAGTST) provides a ligand contact to ATP.

The protein belongs to the phosphoribulokinase family. As to quaternary structure, homooctamer.

It catalyses the reaction D-ribulose 5-phosphate + ATP = D-ribulose 1,5-bisphosphate + ADP + H(+). Its pathway is carbohydrate biosynthesis; Calvin cycle. With respect to regulation, activated by NADH and inhibited by phosphoenolpyruvate. This Cereibacter sphaeroides (Rhodobacter sphaeroides) protein is Phosphoribulokinase 1 (prkA).